We begin with the raw amino-acid sequence, 359 residues long: Mitochondrial glutathione transporter SLC25A39 (359 aa).

Over 1-18 (MGDRPAVRISAAITPVQQ) the chain is Mitochondrial intermembrane. Solcar repeat units lie at residues 13 to 149 (ITPV…LRDF), 157 to 241 (HGDH…VKAQ), and 251 to 346 (ASFT…GKTF). A helical membrane pass occupies residues 19 to 39 (MLASGTGAVLTSLFVTPLDVV). Residues 40–119 (KIRLQAQQTP…VKITHNEGLR (80 aa)) lie on the Mitochondrial matrix side of the membrane. [2Fe-2S] cluster-binding residues include Cys-72, Cys-76, Cys-86, and Cys-92. A helical transmembrane segment spans residues 120–140 (SLWSGLPPTLVMAVPATVIYF). Residues 141–162 (TCYDQLRDFLCYSMGYHGDHIP) lie on the Mitochondrial intermembrane side of the membrane. The helical transmembrane segment at 163-183 (LIAGGLARLGAVSVISPLELV) threads the bilayer. The Mitochondrial matrix segment spans residues 184–212 (RTKMQSRRLQYSELMVCIRSSVAQDGWLS). The helical transmembrane segment at 213 to 233 (LWRGWGPTVLRDVPFSALYWF) threads the bilayer. The Mitochondrial intermembrane portion of the chain corresponds to 234 to 253 (NYELVKAQLCEHYRTPQASF). A helical transmembrane segment spans residues 254–274 (TISFTAGAVSGAIAAVLTLPF). The Mitochondrial matrix segment spans residues 275–316 (DVVKTRRQIQLGEMEALGAVSMKKPSSTWNMMRNIWIDMGYK). The chain crosses the membrane as a helical span at residues 317-337 (GLFAGFLPRVIKVAPACAVMI). Over 338 to 359 (STYEFGKTFFQERNLHQARCGL) the chain is Mitochondrial intermembrane.

This sequence belongs to the mitochondrial carrier (TC 2.A.29) family. Cleaved and degraded by AFG3L2; degradation by AFG3L2 is regulated by the ability of SLC25A39 to bind iron-sulfur. In absence of mitochondrial glutathione, SLC25A39 binds iron-sulfur, preventing cleavage and degradation by AFG3L2. The presence of mitochondrial glutathione prevents iron-sulfur-binding to SLC25A39, promoting cleavage and degradation by AFG3L2.

Its subcellular location is the mitochondrion inner membrane. It carries out the reaction glutathione(in) = glutathione(out). The activity of SLC25A39 is regulated by levels of mitochondrial glutathione via its ability to bind [2Fe-2S] iron-sulfur cluster. Upon physiological levels of mitochondrial glutathione, glutathione prevents iron-sulfur-binding to SLC25A39 promoting cleavage and degradation by AFG3L2. Upon depletion of mitochondrial glutathione, SLC25A39 binds iron-sulfur, preventing cleavage and degradation by AFG3L2. Mitochondrial transporter required for glutathione import into mitochondria. Glutathione, which plays key roles in oxidative metabolism, is produced exclusively in the cytosol and is imported in many organelles. Mitochondrial glutathione is required for the activity and stability of proteins containing iron-sulfur clusters, as well as erythropoiesis. Involved in the early steps of heme biosynthesis. The sequence is that of Mitochondrial glutathione transporter SLC25A39 (slc25a39) from Danio rerio (Zebrafish).